The primary structure comprises 178 residues: Large ribosomal subunit protein uL5 (178 aa).

The protein belongs to the universal ribosomal protein uL5 family. As to quaternary structure, part of the 50S ribosomal subunit; part of the 5S rRNA/L5/L18/L25 subcomplex. Contacts the 5S rRNA and the P site tRNA. Forms a bridge to the 30S subunit in the 70S ribosome.

Its function is as follows. This is one of the proteins that bind and probably mediate the attachment of the 5S RNA into the large ribosomal subunit, where it forms part of the central protuberance. In the 70S ribosome it contacts protein S13 of the 30S subunit (bridge B1b), connecting the 2 subunits; this bridge is implicated in subunit movement. Contacts the P site tRNA; the 5S rRNA and some of its associated proteins might help stabilize positioning of ribosome-bound tRNAs. This chain is Large ribosomal subunit protein uL5, found in Wigglesworthia glossinidia brevipalpis.